Consider the following 493-residue polypeptide: Chromosomal replication initiator protein DnaA (493 aa).

The tract at residues 1-105 is domain I, interacts with DnaA modulators; it reads MSDTIQQEAP…LMYSIVIDKS (105 aa). The segment at 105-152 is domain II; sequence SQGQPVTIELPHQIDAAPAERSVRPEAPGQKASAERERLEIARPRFES. A disordered region spans residues 121–140; sequence APAERSVRPEAPGQKASAER. Residues 153-370 are domain III, AAA+ region; sequence NLNPKYTFST…GCIVKLLAAH (218 aa). ATP contacts are provided by G198, G200, K201, and T202. The interval 371 to 493 is domain IV, binds dsDNA; that stretch reads SLDNQEIDLQ…LRKRIEIMSM (123 aa).

This sequence belongs to the DnaA family. In terms of assembly, oligomerizes as a right-handed, spiral filament on DNA at oriC.

It localises to the cytoplasm. In terms of biological role, plays an essential role in the initiation and regulation of chromosomal replication. ATP-DnaA binds to the origin of replication (oriC) to initiate formation of the DNA replication initiation complex once per cell cycle. Binds the DnaA box (a 9 base pair repeat at the origin) and separates the double-stranded (ds)DNA. Forms a right-handed helical filament on oriC DNA; dsDNA binds to the exterior of the filament while single-stranded (ss)DNA is stabiized in the filament's interior. The ATP-DnaA-oriC complex binds and stabilizes one strand of the AT-rich DNA unwinding element (DUE), permitting loading of DNA polymerase. After initiation quickly degrades to an ADP-DnaA complex that is not apt for DNA replication. Binds acidic phospholipids. The protein is Chromosomal replication initiator protein DnaA of Chlorobaculum tepidum (strain ATCC 49652 / DSM 12025 / NBRC 103806 / TLS) (Chlorobium tepidum).